We begin with the raw amino-acid sequence, 463 residues long: Annexin A7 (463 aa).

2 stretches are compositionally biased toward pro residues: residues M1–P18 and F26–F38. Disordered stretches follow at residues M1–Y54 and G71–T153. Residues M1–P140 form a repeat-rich region region. Residues G5–T20 form a 3 X 5 AA tandem repeats of G-Y-P-P-X region. A compositionally biased stretch (gly residues) spans G86–F99. Annexin repeat units lie at residues F160–M231, P232–Q303, Q315–Q387, and N391–G462. K208 carries the post-translational modification N6-acetyllysine.

The protein belongs to the annexin family. As to quaternary structure, interacts with PDCD6.

Its function is as follows. Calcium/phospholipid-binding protein which promotes membrane fusion and is involved in exocytosis. The protein is Annexin A7 (ANXA7) of Bos taurus (Bovine).